Consider the following 734-residue polypeptide: ABC transporter D family member 1 (734 aa).

A run of 4 helical transmembrane segments spans residues Ile52–Gly72, Phe112–Ala132, Phe177–Tyr197, and Thr204–Ile224. The ABC transmembrane type-1 domain occupies Pro63–Phe351. Basic and acidic residues predominate over residues His271–Glu286. The interval His271 to Glu296 is disordered. The stretch at Asp332–Lys359 forms a coiled coil. The chain crosses the membrane as a helical span at residues Leu374–Leu394. An ABC transporter domain is found at Ile492 to Glu729. Residue Gly525 to Ser532 coordinates ATP. The segment covering Gln712–Asn725 has biased composition (low complexity). The tract at residues Gln712–Asp734 is disordered.

This sequence belongs to the ABC transporter superfamily. ABCD family. Peroxisomal fatty acyl CoA transporter (TC 3.A.1.203) subfamily.

Its subcellular location is the membrane. The catalysed reaction is (9Z)-octadecenoyl-CoA(in) = (9Z)-octadecenoyl-CoA(out). This Dictyostelium discoideum (Social amoeba) protein is ABC transporter D family member 1 (abcD1).